The chain runs to 364 residues: Cobalt-precorrin-5B C(1)-methyltransferase (364 aa).

This sequence belongs to the CbiD family.

It carries out the reaction Co-precorrin-5B + S-adenosyl-L-methionine = Co-precorrin-6A + S-adenosyl-L-homocysteine. The protein operates within cofactor biosynthesis; adenosylcobalamin biosynthesis; cob(II)yrinate a,c-diamide from sirohydrochlorin (anaerobic route): step 6/10. In terms of biological role, catalyzes the methylation of C-1 in cobalt-precorrin-5B to form cobalt-precorrin-6A. This is Cobalt-precorrin-5B C(1)-methyltransferase from Pseudomonas putida (strain ATCC 700007 / DSM 6899 / JCM 31910 / BCRC 17059 / LMG 24140 / F1).